Consider the following 865-residue polypeptide: Probable beta-glucosidase J (865 aa).

Asp233 is a catalytic residue. N-linked (GlcNAc...) asparagine glycans are attached at residues Asn330, Asn447, Asn503, and Asn764. The PA14 domain occupies 411-579; that stretch reads TGQPGYTFRV…DTDTAIQQAV (169 aa).

It belongs to the glycosyl hydrolase 3 family.

The protein localises to the secreted. The catalysed reaction is Hydrolysis of terminal, non-reducing beta-D-glucosyl residues with release of beta-D-glucose.. Its pathway is glycan metabolism; cellulose degradation. Beta-glucosidases are one of a number of cellulolytic enzymes involved in the degradation of cellulosic biomass. Catalyzes the last step releasing glucose from the inhibitory cellobiose. The chain is Probable beta-glucosidase J (bglJ) from Aspergillus fumigatus (strain ATCC MYA-4609 / CBS 101355 / FGSC A1100 / Af293) (Neosartorya fumigata).